We begin with the raw amino-acid sequence, 234 residues long: UPF0173 metal-dependent hydrolase Msp_0516 (234 aa).

This sequence belongs to the UPF0173 family.

This is UPF0173 metal-dependent hydrolase Msp_0516 from Methanosphaera stadtmanae (strain ATCC 43021 / DSM 3091 / JCM 11832 / MCB-3).